Consider the following 298-residue polypeptide: 4-hydroxy-tetrahydrodipicolinate synthase (298 aa).

A pyruvate-binding site is contributed by threonine 51. Tyrosine 139 (proton donor/acceptor) is an active-site residue. Lysine 167 functions as the Schiff-base intermediate with substrate in the catalytic mechanism. Pyruvate is bound at residue isoleucine 209.

The protein belongs to the DapA family. Homotetramer; dimer of dimers.

Its subcellular location is the cytoplasm. The catalysed reaction is L-aspartate 4-semialdehyde + pyruvate = (2S,4S)-4-hydroxy-2,3,4,5-tetrahydrodipicolinate + H2O + H(+). Its pathway is amino-acid biosynthesis; L-lysine biosynthesis via DAP pathway; (S)-tetrahydrodipicolinate from L-aspartate: step 3/4. Catalyzes the condensation of (S)-aspartate-beta-semialdehyde [(S)-ASA] and pyruvate to 4-hydroxy-tetrahydrodipicolinate (HTPA). In Haemophilus influenzae (strain ATCC 51907 / DSM 11121 / KW20 / Rd), this protein is 4-hydroxy-tetrahydrodipicolinate synthase.